The sequence spans 269 residues: Putative phosphoenolpyruvate synthase regulatory protein (269 aa).

Residue 149–156 (GVSRSGKT) coordinates ADP.

This sequence belongs to the pyruvate, phosphate/water dikinase regulatory protein family. PSRP subfamily.

The enzyme catalyses [pyruvate, water dikinase] + ADP = [pyruvate, water dikinase]-phosphate + AMP + H(+). The catalysed reaction is [pyruvate, water dikinase]-phosphate + phosphate + H(+) = [pyruvate, water dikinase] + diphosphate. Functionally, bifunctional serine/threonine kinase and phosphorylase involved in the regulation of the phosphoenolpyruvate synthase (PEPS) by catalyzing its phosphorylation/dephosphorylation. The polypeptide is Putative phosphoenolpyruvate synthase regulatory protein (Colwellia psychrerythraea (strain 34H / ATCC BAA-681) (Vibrio psychroerythus)).